Here is a 578-residue protein sequence, read N- to C-terminus: CTP synthase (578 aa).

Positions 305–559 (KIALVGKYTN…LGLVAASSGI (255 aa)) constitute a Glutamine amidotransferase type-1 domain. Catalysis depends on for GATase activity residues C404, H535, and E537.

It belongs to the CTP synthase family.

The catalysed reaction is UTP + L-glutamine + ATP + H2O = CTP + L-glutamate + ADP + phosphate + 2 H(+). It functions in the pathway pyrimidine metabolism; CTP biosynthesis via de novo pathway; CTP from UDP: step 2/2. In terms of biological role, catalyzes the ATP-dependent amination of UTP to CTP with either L-glutamine or ammonia as the source of nitrogen. This is CTP synthase (URA7) from Candida glabrata (strain ATCC 2001 / BCRC 20586 / JCM 3761 / NBRC 0622 / NRRL Y-65 / CBS 138) (Yeast).